A 290-amino-acid polypeptide reads, in one-letter code: Poly-beta-1,6-N-acetyl-D-glucosamine N-deacetylase (290 aa).

The N-terminal stretch at Met1–Ala28 is a signal peptide. In terms of domain architecture, NodB homology spans Arg114–Asp290.

The protein belongs to the polysaccharide deacetylase family.

It is found in the secreted. Its subcellular location is the cell wall. Its function is as follows. Catalyzes the N-deacetylation of poly-beta-1,6-N-acetyl-D-glucosamine (PNAG, also referred to as PIA), a biofilm adhesin polysaccharide. N-deacetylation is crucial for attachment of the polysaccharide to the bacterial cell surface; it leads to the introduction of positive charges in the otherwise neutral PIA polymer, allowing electrostatic interactions. The protein is Poly-beta-1,6-N-acetyl-D-glucosamine N-deacetylase (icaB) of Staphylococcus aureus (strain Mu50 / ATCC 700699).